The primary structure comprises 214 residues: Large ribosomal subunit protein uL3 (214 aa).

Residues 119–159 form a disordered region; sequence GVKRHGFAGGPKTHGQSDRHRAPGSIGPTTDPGRVHKGKRM.

The protein belongs to the universal ribosomal protein uL3 family. Part of the 50S ribosomal subunit. Forms a cluster with proteins L14 and L19.

Functionally, one of the primary rRNA binding proteins, it binds directly near the 3'-end of the 23S rRNA, where it nucleates assembly of the 50S subunit. The sequence is that of Large ribosomal subunit protein uL3 from Thermomicrobium roseum (strain ATCC 27502 / DSM 5159 / P-2).